A 294-amino-acid chain; its full sequence is Probable 3-hydroxyisobutyrate dehydrogenase (294 aa).

Residues 3–31 (TIAF…RGFD) and threonine 93 each bind NAD(+). Lysine 168 is an active-site residue. NAD(+) is bound at residue lysine 243.

It belongs to the HIBADH-related family.

It carries out the reaction 3-hydroxy-2-methylpropanoate + NAD(+) = 2-methyl-3-oxopropanoate + NADH + H(+). It participates in amino-acid degradation; L-valine degradation. This chain is Probable 3-hydroxyisobutyrate dehydrogenase (mmsB), found in Mycobacterium bovis (strain ATCC BAA-935 / AF2122/97).